We begin with the raw amino-acid sequence, 146 residues long: Cytochrome c-type biogenesis protein CcmE (146 aa).

Residues 1–8 (MNPRRKKR) lie on the Cytoplasmic side of the membrane. The chain crosses the membrane as a helical; Signal-anchor for type II membrane protein span at residues 9–29 (LGLILALVLGASATVGLMLYA). At 30 to 146 (LNQNMDLFYT…EVAEAMKKTH (117 aa)) the chain is on the periplasmic side. Heme is bound by residues His-129 and Tyr-133.

The protein belongs to the CcmE/CycJ family.

Its subcellular location is the cell inner membrane. Its function is as follows. Heme chaperone required for the biogenesis of c-type cytochromes. Transiently binds heme delivered by CcmC and transfers the heme to apo-cytochromes in a process facilitated by CcmF and CcmH. The chain is Cytochrome c-type biogenesis protein CcmE from Aliivibrio salmonicida (strain LFI1238) (Vibrio salmonicida (strain LFI1238)).